The chain runs to 287 residues: Nucleotide-binding protein Pmob_0154 (287 aa).

ATP is bound at residue 15–22 (GLSGAGKT). Position 64–67 (64–67 (DIRW)) interacts with GTP.

The protein belongs to the RapZ-like family.

Displays ATPase and GTPase activities. The sequence is that of Nucleotide-binding protein Pmob_0154 from Petrotoga mobilis (strain DSM 10674 / SJ95).